The chain runs to 426 residues: MSKSENLYSAARELIPGGVNSPVRAFTGVGGTPLFIEKADGAYLYDVDGKAYIDYVGSWGPMVLGHNHPAIRNAVIEAAERGLSFGAPTEMEVKMAQLVTELVPTMDMVRMVNSGTEATMSAIRLARGFTGRDKIIKFEGCYHGHADCLLVKAGSGALTLGQPNSPGVPADFAKYTLTCTYNDLASVRAAFEQYPQEIACIIVEPVAGNMNCVPPLPEFLPGLRALCDEFGALLIIDEVMTGFRVALAGAQDYYGVVPDLTCLGKIIGGGMPVGAFGGRRDVMDALAPTGPVYQAGTLSGNPIAMAAGFACLNEVAQPGVHETLDELTTRLAEGLLEAAEEAGIPLVVNHVGGMFGIFFTDAESVTCYQDVMACDVERFKRFFHMMLDEGVYLAPSAFEAGFMSVAHSMEDINNTIDAARRVFAKL.

N6-(pyridoxal phosphate)lysine is present on Lys-265.

Belongs to the class-III pyridoxal-phosphate-dependent aminotransferase family. HemL subfamily. As to quaternary structure, homodimer. Requires pyridoxal 5'-phosphate as cofactor.

The protein resides in the cytoplasm. It catalyses the reaction (S)-4-amino-5-oxopentanoate = 5-aminolevulinate. The protein operates within porphyrin-containing compound metabolism; protoporphyrin-IX biosynthesis; 5-aminolevulinate from L-glutamyl-tRNA(Glu): step 2/2. This chain is Glutamate-1-semialdehyde 2,1-aminomutase, found in Escherichia coli (strain K12 / DH10B).